A 406-amino-acid polypeptide reads, in one-letter code: Dematin (406 aa).

2 disordered regions span residues 1–30 (MERLQKQPLTSPGSVSSSRDSSVPGSPSSI) and 78–333 (LPRS…DRGN). Over residues 11 to 29 (SPGSVSSSRDSSVPGSPSS) the composition is skewed to low complexity. A phosphoserine mark is found at S16, S18, S26, S92, S96, S105, S110, S113, S157, and S227. A compositionally biased stretch (polar residues) spans 105-114 (SPGTISQASA). Acidic residues predominate over residues 217–228 (EEEEEEEDDDSG). Residues 225-309 (DDSGEEMKAL…SRLQSTDFSP (85 aa)) are interaction with RASGRF2. Basic and acidic residues-rich tracts occupy residues 229–243 (EEMKALRERQREELS) and 253–262 (ILKEEMEKSL). A phosphoserine mark is found at S270, S280, S290, S304, S316, S334, S373, and S384. The span at 282–323 (HAGTSKSSSLPAYGRTTLSRLQSTDFSPSGSEAESPGLQNGE) shows a compositional bias: polar residues. An HP domain is found at 338-406 (VLEQKIYPYE…NELKKKASLF (69 aa)). S404 carries the post-translational modification Phosphoserine; by PKA.

Belongs to the villin/gelsolin family. In terms of assembly, monomeric; under reducing conditions. Self-associates. Exists under oxidizing condition as a trimer linked by disulfide bonds. Found in a complex with DMTN, F-actin and spectrin. Found in a complex with ADD2, DMTN and SLC2A1. Interacts with F-actin, ITPKB and spectrin. Interacts with SLC2A1 (via C-terminus cytoplasmic region). Interacts with RASGRF2. In terms of processing, phosphorylated. Phosphorylation at Ser-404 by PKA causes the C-terminal headpiece domain to associate with the N-terminal core domain, and leads to the inhibition of its actin bundling activity.

The protein resides in the cytoplasm. Its subcellular location is the cytosol. The protein localises to the perinuclear region. It localises to the cytoskeleton. It is found in the cell membrane. The protein resides in the membrane. Its subcellular location is the endomembrane system. The protein localises to the cell projection. Membrane-cytoskeleton-associated protein with F-actin-binding activity that induces F-actin bundles formation and stabilization. Its F-actin-bundling activity is reversibly regulated upon its phosphorylation by the cAMP-dependent protein kinase A (PKA). Binds to the erythrocyte membrane glucose transporter-1 SLC2A1/GLUT1, and hence stabilizes and attaches the spectrin-actin network to the erythrocytic plasma membrane. Plays a role in maintaining the functional integrity of PKA-activated erythrocyte shape and the membrane mechanical properties. Also plays a role as a modulator of actin dynamics in fibroblasts; acts as a negative regulator of the RhoA activation pathway. In platelets, functions as a regulator of internal calcium mobilization across the dense tubular system that affects platelet granule secretion pathways and aggregation. Also required for the formation of a diverse set of cell protrusions, such as filopodia and lamellipodia, necessary for platelet cell spreading, motility and migration. Acts as a tumor suppressor and inhibits malignant cell transformation. This chain is Dematin (DMTN), found in Bos taurus (Bovine).